Consider the following 150-residue polypeptide: MAKKLVGSMKLQIPAGQANPSPPVGPALGQRGINIMEFCKAFNAKTQEMEQGAPCPTVITYYQDKSFTMDIKTPPASYYLKKAAGLKPVGKRNRPRGAETPGRETVASITSKQLREIAEAKMVDLSANDVEAAMKIILGSAKSMGIEVKG.

The protein belongs to the universal ribosomal protein uL11 family. Part of the ribosomal stalk of the 50S ribosomal subunit. Interacts with L10 and the large rRNA to form the base of the stalk. L10 forms an elongated spine to which L12 dimers bind in a sequential fashion forming a multimeric L10(L12)X complex. Post-translationally, one or more lysine residues are methylated.

In terms of biological role, forms part of the ribosomal stalk which helps the ribosome interact with GTP-bound translation factors. This chain is Large ribosomal subunit protein uL11, found in Jannaschia sp. (strain CCS1).